The chain runs to 338 residues: UDP-glucose 4-epimerase (338 aa).

NAD(+) is bound by residues 11–12 (YI), 31–36 (DNLCNS), 58–59 (DI), 80–84 (FAGLK), Asn-99, Ser-124, Tyr-149, Lys-153, and Phe-178. 2 residues coordinate substrate: Ser-124 and Tyr-149. Tyr-149 serves as the catalytic Proton acceptor. Residues Asn-179, 199–200 (NL), 216–218 (AVF), Arg-231, 292–295 (RDGD), and Tyr-299 contribute to the substrate site.

The protein belongs to the NAD(P)-dependent epimerase/dehydratase family. Homodimer. The cofactor is NAD(+).

The enzyme catalyses UDP-alpha-D-glucose = UDP-alpha-D-galactose. The protein operates within carbohydrate metabolism; galactose metabolism. Its function is as follows. Involved in the metabolism of galactose. Catalyzes the conversion of UDP-galactose (UDP-Gal) to UDP-glucose (UDP-Glc) through a mechanism involving the transient reduction of NAD. The chain is UDP-glucose 4-epimerase (galE) from Salmonella typhimurium (strain LT2 / SGSC1412 / ATCC 700720).